Consider the following 491-residue polypeptide: Sucrose transport protein SUC9 (491 aa).

The segment covering 1 to 12 (MSDIQAKEDAAP) has biased composition (basic and acidic residues). A disordered region spans residues 1-26 (MSDIQAKEDAAPVDRQSSSSVVVPDE). Residues 1–33 (MSDIQAKEDAAPVDRQSSSSVVVPDEPSPLRKM) are Cytoplasmic-facing. At serine 17 the chain carries Phosphoserine. A helical transmembrane segment spans residues 34–54 (ISVASIAAGIQFGWALQLSLL). Residues 55–68 (TPYVQLLGVPHKWS) are Extracellular-facing. The helical transmembrane segment at 69-89 (SFIWLCGPISGLLVQPTVGYF) threads the bilayer. At 90-101 (SDRCKSRFGRRR) the chain is on the cytoplasmic side. A helical membrane pass occupies residues 102-122 (PFIATGALLVALAVILIGFAA). At 123–139 (DFGHTMGDKLDEAVKIR) the chain is on the extracellular side. A helical membrane pass occupies residues 140-160 (AVGFFVVGFWILDVANNTLQG). Residues 161–181 (PCRAFLGDLAAGDAKKTRTAN) are Cytoplasmic-facing. Residues 182–202 (AIFSFFMAVGNVLGYAAGSYT) form a helical membrane-spanning segment. Topologically, residues 203–224 (NLHKIFPFTVTKACDIYCANLK) are extracellular. The helical transmembrane segment at 225–245 (SCFIISITLLIVLTIIALWYV) threads the bilayer. The Cytoplasmic portion of the chain corresponds to 246-277 (EDKQWSPNADSDNEKTPFFGEIFGAFKVMKRP). A helical transmembrane segment spans residues 278 to 298 (MWMLLAVTALNWIAWFPFLLY). Topologically, residues 299–329 (DTDWMGREVYGGDSAGDDKMKKLYNHGIQVG) are extracellular. The chain crosses the membrane as a helical span at residues 330 to 350 (SLGLMLNSIVLGVMSLVIGVI). Topologically, residues 351–358 (SKKIGAKR) are cytoplasmic. Residues 359–379 (LWGAVNIILAVCLAMTVLVTK) form a helical membrane-spanning segment. The Extracellular portion of the chain corresponds to 380–406 (KAEEHRKIAGRMALPTNAIRDGALSLF). A helical transmembrane segment spans residues 407–427 (AILGIPLAITFSIPFALASII). Over 428–443 (SSSSGAGQGLSLGVLN) the chain is Cytoplasmic. Residues 444–464 (MAIVIPQMIVSFGVGPIDALF) form a helical membrane-spanning segment. Residues 465-468 (GGGN) are Extracellular-facing. The helical transmembrane segment at 469–489 (LPGFVVGAIAALISSVVALTV) threads the bilayer. At 490–491 (LP) the chain is on the cytoplasmic side.

Belongs to the glycoside-pentoside-hexuronide (GPH) cation symporter transporter (TC 2.A.2.4) family. As to expression, widely expressed.

It is found in the cell membrane. It carries out the reaction sucrose(out) + H(+)(out) = sucrose(in) + H(+)(in). Its pathway is glycan biosynthesis; sucrose metabolism. Inhibited by protonophores (e.g. carbonyl cyanide m-chlorophenyl-hydrazone (CCCP)) and SH group inhibitors (e.g. p-chloromercuribenzene sulphonic acid (PCMBS)). Its function is as follows. High-affinity sucrose transporter. Responsible for the transport of sucrose into the cell, with the concomitant uptake of protons (symport system). Can also transport a wide range of glucosides, such as helicin, salicin, arbutin, maltose, fraxin, esculin, uranose, alpha-methylglucoside, alpha-phenylglucoside and beta-phenylglucoside. Plays a role in flowering time transition delay. The protein is Sucrose transport protein SUC9 of Arabidopsis thaliana (Mouse-ear cress).